A 213-amino-acid polypeptide reads, in one-letter code: Ribosomal RNA small subunit methyltransferase G (213 aa).

Residues G75, F80, 128-129 (IE), and R144 each bind S-adenosyl-L-methionine.

Belongs to the methyltransferase superfamily. RNA methyltransferase RsmG family.

It localises to the cytoplasm. The catalysed reaction is guanosine(527) in 16S rRNA + S-adenosyl-L-methionine = N(7)-methylguanosine(527) in 16S rRNA + S-adenosyl-L-homocysteine. Specifically methylates the N7 position of guanine in position 527 of 16S rRNA. In Brucella anthropi (strain ATCC 49188 / DSM 6882 / CCUG 24695 / JCM 21032 / LMG 3331 / NBRC 15819 / NCTC 12168 / Alc 37) (Ochrobactrum anthropi), this protein is Ribosomal RNA small subunit methyltransferase G.